Here is a 295-residue protein sequence, read N- to C-terminus: Aspartate carbamoyltransferase catalytic subunit (295 aa).

Residues Arg-49 and Thr-50 each contribute to the carbamoyl phosphate site. Position 77 (Lys-77) interacts with L-aspartate. 3 residues coordinate carbamoyl phosphate: Arg-99, His-127, and Gln-130. Arg-161 and Arg-212 together coordinate L-aspartate. Carbamoyl phosphate-binding residues include Gly-251 and Pro-252.

Belongs to the aspartate/ornithine carbamoyltransferase superfamily. ATCase family. As to quaternary structure, heterododecamer (2C3:3R2) of six catalytic PyrB chains organized as two trimers (C3), and six regulatory PyrI chains organized as three dimers (R2).

The catalysed reaction is carbamoyl phosphate + L-aspartate = N-carbamoyl-L-aspartate + phosphate + H(+). Its pathway is pyrimidine metabolism; UMP biosynthesis via de novo pathway; (S)-dihydroorotate from bicarbonate: step 2/3. Functionally, catalyzes the condensation of carbamoyl phosphate and aspartate to form carbamoyl aspartate and inorganic phosphate, the committed step in the de novo pyrimidine nucleotide biosynthesis pathway. This is Aspartate carbamoyltransferase catalytic subunit from Campylobacter jejuni subsp. doylei (strain ATCC BAA-1458 / RM4099 / 269.97).